The following is a 446-amino-acid chain: Trigger factor (446 aa).

The region spanning 163 to 248 is the PPIase FKBP-type domain; that stretch reads GDIVTIDFKG…VRGIKRKKLA (86 aa). A disordered region spans residues 423-446; it reads SKPVPPREQGAAGETAETAEATPA. Low complexity predominate over residues 432–446; the sequence is GAAGETAETAEATPA.

This sequence belongs to the FKBP-type PPIase family. Tig subfamily.

The protein resides in the cytoplasm. The enzyme catalyses [protein]-peptidylproline (omega=180) = [protein]-peptidylproline (omega=0). In terms of biological role, involved in protein export. Acts as a chaperone by maintaining the newly synthesized protein in an open conformation. Functions as a peptidyl-prolyl cis-trans isomerase. The polypeptide is Trigger factor (Moorella thermoacetica (strain ATCC 39073 / JCM 9320)).